A 425-amino-acid polypeptide reads, in one-letter code: Serine--tRNA ligase (425 aa).

An L-serine-binding site is contributed by Thr-233–Glu-235. Arg-264 to Glu-266 is a binding site for ATP. An L-serine-binding site is contributed by Glu-287. Glu-351–Ser-354 lines the ATP pocket. Ser-385 is an L-serine binding site.

It belongs to the class-II aminoacyl-tRNA synthetase family. Type-1 seryl-tRNA synthetase subfamily. In terms of assembly, homodimer. The tRNA molecule binds across the dimer.

The protein resides in the cytoplasm. It carries out the reaction tRNA(Ser) + L-serine + ATP = L-seryl-tRNA(Ser) + AMP + diphosphate + H(+). It catalyses the reaction tRNA(Sec) + L-serine + ATP = L-seryl-tRNA(Sec) + AMP + diphosphate + H(+). Its pathway is aminoacyl-tRNA biosynthesis; selenocysteinyl-tRNA(Sec) biosynthesis; L-seryl-tRNA(Sec) from L-serine and tRNA(Sec): step 1/1. Functionally, catalyzes the attachment of serine to tRNA(Ser). Is also able to aminoacylate tRNA(Sec) with serine, to form the misacylated tRNA L-seryl-tRNA(Sec), which will be further converted into selenocysteinyl-tRNA(Sec). This is Serine--tRNA ligase from Prochlorococcus marinus (strain AS9601).